The following is a 407-amino-acid chain: 41 kDa spicule matrix protein (407 aa).

The signal sequence occupies residues 1–17 (MKGVLFIVASLVAFATG). One can recognise a C-type lectin domain in the interval 29–160 (SGQSCYRYFN…PGRAPVMKRQ (132 aa)). Disordered stretches follow at residues 143–176 (PQNPMSGPPGRAPVMKRQNPPVRPGQGGRQIPQG) and 204–407 (IGQQ…DALA). Residues 223-369 (NQPGMGGRQP…MGGRQPGMGG (147 aa)) are compositionally biased toward gly residues. Residues 370–398 (QQPNNPNNPNNPNNPNNPNNPNPRFNRPR) are compositionally biased toward low complexity.

This sequence belongs to the SM50 family. In terms of tissue distribution, expressed specifically in the micromere/primary mesenchyme cells (PMC) lineage.

It is found in the secreted. In terms of biological role, major matrix protein of the sea urchin embryo spicule which directs crystal growth in certain orientations and inhibit growth in others. The polypeptide is 41 kDa spicule matrix protein (Hemicentrotus pulcherrimus (Sea urchin)).